A 149-amino-acid polypeptide reads, in one-letter code: SsrA-binding protein (149 aa).

It belongs to the SmpB family.

The protein localises to the cytoplasm. Required for rescue of stalled ribosomes mediated by trans-translation. Binds to transfer-messenger RNA (tmRNA), required for stable association of tmRNA with ribosomes. tmRNA and SmpB together mimic tRNA shape, replacing the anticodon stem-loop with SmpB. tmRNA is encoded by the ssrA gene; the 2 termini fold to resemble tRNA(Ala) and it encodes a 'tag peptide', a short internal open reading frame. During trans-translation Ala-aminoacylated tmRNA acts like a tRNA, entering the A-site of stalled ribosomes, displacing the stalled mRNA. The ribosome then switches to translate the ORF on the tmRNA; the nascent peptide is terminated with the 'tag peptide' encoded by the tmRNA and targeted for degradation. The ribosome is freed to recommence translation, which seems to be the essential function of trans-translation. The sequence is that of SsrA-binding protein from Wolbachia pipientis wMel.